A 181-amino-acid chain; its full sequence is Large ribosomal subunit protein bL17 (181 aa).

A compositionally biased stretch (low complexity) spans K141–A159. The disordered stretch occupies residues K141 to D181. Residues D171 to D181 show a composition bias toward basic and acidic residues.

It belongs to the bacterial ribosomal protein bL17 family. Part of the 50S ribosomal subunit. Contacts protein L32.

The polypeptide is Large ribosomal subunit protein bL17 (Geotalea daltonii (strain DSM 22248 / JCM 15807 / FRC-32) (Geobacter daltonii)).